A 544-amino-acid chain; its full sequence is Chaperonin GroEL 2 (544 aa).

Residues 29-32, 86-90, Gly-413, 479-481, and Asp-495 contribute to the ATP site; these read TLGP, DGTTT, and NAA.

Belongs to the chaperonin (HSP60) family. In terms of assembly, forms a cylinder of 14 subunits composed of two heptameric rings stacked back-to-back. Interacts with the co-chaperonin GroES.

The protein localises to the cytoplasm. The catalysed reaction is ATP + H2O + a folded polypeptide = ADP + phosphate + an unfolded polypeptide.. Its function is as follows. Together with its co-chaperonin GroES, plays an essential role in assisting protein folding. The GroEL-GroES system forms a nano-cage that allows encapsulation of the non-native substrate proteins and provides a physical environment optimized to promote and accelerate protein folding. This chain is Chaperonin GroEL 2, found in Synechococcus sp. (strain WH7803).